The sequence spans 174 residues: Gamma-crystallin F (174 aa).

Beta/gamma crystallin 'Greek key' domains are found at residues 2 to 40 (GKIT…RVDS) and 41 to 83 (GCWM…HLIP). The interval 84–87 (HSSS) is connecting peptide. Beta/gamma crystallin 'Greek key' domains lie at 88–128 (HRIR…HVIE) and 129–171 (GYWV…RRIM).

It belongs to the beta/gamma-crystallin family.

In terms of biological role, crystallins are the dominant structural components of the vertebrate eye lens. The protein is Gamma-crystallin F (Crygf) of Rattus norvegicus (Rat).